The chain runs to 333 residues: Transcription initiation factor IIB (333 aa).

The segment at 33 to 64 adopts a TFIIB-type zinc-finger fold; it reads EVYRCPICGNDRFVYNYERGEIVCIVCGAVVQ. The Zn(2+) site is built by Cys37, Cys40, Cys56, and Cys59. Tandem repeats lie at residues 149–232 and 243–324.

Belongs to the TFIIB family.

Its function is as follows. Stabilizes TBP binding to an archaeal box-A promoter. Also responsible for recruiting RNA polymerase II to the pre-initiation complex (DNA-TBP-TFIIB). This is Transcription initiation factor IIB from Pyrobaculum islandicum (strain DSM 4184 / JCM 9189 / GEO3).